A 428-amino-acid chain; its full sequence is Enolase 1 (428 aa).

Gln167 serves as a coordination point for (2R)-2-phosphoglycerate. Glu209 serves as the catalytic Proton donor. Positions 246, 288, and 315 each coordinate Mg(2+). (2R)-2-phosphoglycerate contacts are provided by Lys340, Arg369, Ser370, and Lys391. Lys340 acts as the Proton acceptor in catalysis.

This sequence belongs to the enolase family. As to quaternary structure, component of the RNA degradosome, a multiprotein complex involved in RNA processing and mRNA degradation. Mg(2+) serves as cofactor.

It localises to the cytoplasm. Its subcellular location is the secreted. The protein localises to the cell surface. It carries out the reaction (2R)-2-phosphoglycerate = phosphoenolpyruvate + H2O. The protein operates within carbohydrate degradation; glycolysis; pyruvate from D-glyceraldehyde 3-phosphate: step 4/5. Catalyzes the reversible conversion of 2-phosphoglycerate (2-PG) into phosphoenolpyruvate (PEP). It is essential for the degradation of carbohydrates via glycolysis. The protein is Enolase 1 of Pseudomonas syringae pv. tomato (strain ATCC BAA-871 / DC3000).